A 114-amino-acid polypeptide reads, in one-letter code: Small ribosomal subunit protein bS6 (114 aa).

It belongs to the bacterial ribosomal protein bS6 family.

In terms of biological role, binds together with bS18 to 16S ribosomal RNA. This is Small ribosomal subunit protein bS6 from Hydrogenovibrio crunogenus (strain DSM 25203 / XCL-2) (Thiomicrospira crunogena).